The primary structure comprises 475 residues: Ribulose bisphosphate carboxylase large chain (475 aa).

The propeptide occupies 1-2 (MS). P3 bears the N-acetylproline mark. K14 carries the post-translational modification N6,N6,N6-trimethyllysine. The substrate site is built by N123 and T173. Residue K175 is the Proton acceptor of the active site. K177 lines the substrate pocket. Residues K201, D203, and E204 each contribute to the Mg(2+) site. An N6-carboxylysine modification is found at K201. The active-site Proton acceptor is the H294. 3 residues coordinate substrate: R295, H327, and S379.

It belongs to the RuBisCO large chain family. Type I subfamily. As to quaternary structure, heterohexadecamer of 8 large chains and 8 small chains; disulfide-linked. The disulfide link is formed within the large subunit homodimers. The cofactor is Mg(2+). In terms of processing, the disulfide bond which can form in the large chain dimeric partners within the hexadecamer appears to be associated with oxidative stress and protein turnover.

It localises to the plastid. Its subcellular location is the chloroplast. It catalyses the reaction 2 (2R)-3-phosphoglycerate + 2 H(+) = D-ribulose 1,5-bisphosphate + CO2 + H2O. It carries out the reaction D-ribulose 1,5-bisphosphate + O2 = 2-phosphoglycolate + (2R)-3-phosphoglycerate + 2 H(+). RuBisCO catalyzes two reactions: the carboxylation of D-ribulose 1,5-bisphosphate, the primary event in carbon dioxide fixation, as well as the oxidative fragmentation of the pentose substrate in the photorespiration process. Both reactions occur simultaneously and in competition at the same active site. The chain is Ribulose bisphosphate carboxylase large chain from Cedrus deodara (Deodar cedar).